The chain runs to 338 residues: Ketol-acid reductoisomerase (NADP(+)) (338 aa).

Residues 1 to 181 (MQIYYDKDAD…GGGRAGIIET (181 aa)) enclose the KARI N-terminal Rossmann domain. NADP(+) is bound by residues 24–27 (YGSQ), R47, S50, S52, and 82–85 (DEHQ). The active site involves H107. NADP(+) is bound at residue G133. The region spanning 182 to 327 (TFREETETDL…ARLRDMMPWI (146 aa)) is the KARI C-terminal knotted domain. Positions 190, 194, 226, and 230 each coordinate Mg(2+). S251 provides a ligand contact to substrate.

Belongs to the ketol-acid reductoisomerase family. Mg(2+) serves as cofactor.

It catalyses the reaction (2R)-2,3-dihydroxy-3-methylbutanoate + NADP(+) = (2S)-2-acetolactate + NADPH + H(+). The catalysed reaction is (2R,3R)-2,3-dihydroxy-3-methylpentanoate + NADP(+) = (S)-2-ethyl-2-hydroxy-3-oxobutanoate + NADPH + H(+). It participates in amino-acid biosynthesis; L-isoleucine biosynthesis; L-isoleucine from 2-oxobutanoate: step 2/4. Its pathway is amino-acid biosynthesis; L-valine biosynthesis; L-valine from pyruvate: step 2/4. Functionally, involved in the biosynthesis of branched-chain amino acids (BCAA). Catalyzes an alkyl-migration followed by a ketol-acid reduction of (S)-2-acetolactate (S2AL) to yield (R)-2,3-dihydroxy-isovalerate. In the isomerase reaction, S2AL is rearranged via a Mg-dependent methyl migration to produce 3-hydroxy-3-methyl-2-ketobutyrate (HMKB). In the reductase reaction, this 2-ketoacid undergoes a metal-dependent reduction by NADPH to yield (R)-2,3-dihydroxy-isovalerate. This Methylococcus capsulatus (strain ATCC 33009 / NCIMB 11132 / Bath) protein is Ketol-acid reductoisomerase (NADP(+)).